The following is a 426-amino-acid chain: Trophoblast glycoprotein (426 aa).

The signal sequence occupies residues 1-31; it reads MPGAGSRGPSAGDGRLRLARLALVLLGWVSA. Residues 32–361 lie on the Extracellular side of the membrane; that stretch reads SAPSSSLPSS…ATLPQSLQTS (330 aa). Residues 34–51 show a composition bias toward low complexity; the sequence is PSSSLPSSSTSPAAFLAS. Residues 34-54 form a disordered region; it reads PSSSLPSSSTSPAAFLASGSA. An LRRNT domain is found at 53–91; sequence SAQPPPAERCPAACECSEAARTVKCVNRNLLEVPADLPP. 2 cysteine pairs are disulfide-bonded: Cys-62–Cys-68 and Cys-66–Cys-77. LRR repeat units lie at residues 92 to 113, 116 to 139, and 141 to 163; these read YVRNLFLTGNQMTVLPAGAFAR, PLADLAVLNLSGNHLKEVGAGAFE, and LPGLRRLDLSHNPLTNLSAFTFA. An N-linked (GlcNAc...) asparagine glycan is attached at Asn-124. N-linked (GlcNAc...) asparagine glycosylation occurs at Asn-166. LRR repeat units follow at residues 172-210, 215-238, 239-261, and 262-281; these read PSPLLELILNHIVPPEDQRQNGSFEGMVAFEGMVAAALR, LRGLHHLELASNHFLYLPRDLLDQ, LPSLKHLDLRNNSLVSLTYASFR, and NLTHLESLHLEDNALKVLHN. An N-linked (GlcNAc...) asparagine glycan is attached at Asn-281. The LRRCT domain maps to 289–352; the sequence is GLAHVRVFLD…LTSSDLDCDA (64 aa). Disulfide bonds link Cys-304/Cys-329 and Cys-306/Cys-350. The chain crosses the membrane as a helical span at residues 362-382; that stretch reads YVFLGIVLALIGAIFLLVLYL. Residues 383–426 lie on the Cytoplasmic side of the membrane; the sequence is NRKGIKKWMHNIRDACRDHMEGYHYRYEINADPRLTNLSSNSDV. Ser-424 is modified (phosphoserine).

In terms of processing, highly glycosylated.

Its subcellular location is the cell membrane. May function as an inhibitor of Wnt/beta-catenin signaling by indirectly interacting with LRP6 and blocking Wnt3a-dependent LRP6 internalization. This chain is Trophoblast glycoprotein (Tpbg), found in Rattus norvegicus (Rat).